The chain runs to 305 residues: Homoserine O-acetyltransferase (305 aa).

Cys142 acts as the Acyl-thioester intermediate in catalysis. Substrate is bound by residues Lys163 and Ser192. His235 acts as the Proton acceptor in catalysis. Glu237 is a catalytic residue. Substrate is bound at residue Arg249.

It belongs to the MetA family.

The protein localises to the cytoplasm. It carries out the reaction L-homoserine + acetyl-CoA = O-acetyl-L-homoserine + CoA. It participates in amino-acid biosynthesis; L-methionine biosynthesis via de novo pathway; O-acetyl-L-homoserine from L-homoserine: step 1/1. Its function is as follows. Transfers an acetyl group from acetyl-CoA to L-homoserine, forming acetyl-L-homoserine. In Roseobacter denitrificans (strain ATCC 33942 / OCh 114) (Erythrobacter sp. (strain OCh 114)), this protein is Homoserine O-acetyltransferase.